The primary structure comprises 365 residues: MELDFGHFDERDKTSRNMRGSRMNGLPSPTHSAHCSFYRTRTLQALSNEKKAKKVRFYRNGDRYFKGIVYAVSSDRFRSFDALLADLTRSLSDNINLPQGVRYIYTIDGSRKIGSMDELEEGESYVCSSDNFFKKVEYTKNVNPNWSVNVKTSANMKAPQSLASSNSAQARENKDFVRPKLVTIIRSGVKPRKAVRVLLNKKTAHSFEQVLTDITEAIKLETGVVKKLYTLDGKQVTCLHDFFGDDDVFIACGPEKFRYAQDDFSLDENECRVMKGNPSATAGPKASPTPQKTSAKSPGPMRRSKSPADSGNDQDANGTSSSQLSTPKSKQSPISTPTSPGSLRKHKDLYLPLSLDDSDSLGDSM.

The interval 11–31 is disordered; sequence RDKTSRNMRGSRMNGLPSPTH. T14 bears the Phosphothreonine; by PKC mark. S28 is modified (phosphoserine; by CDK5). S47 bears the Phosphoserine; by MARK1 and PKA mark. Doublecortin domains lie at 53–139 and 180–263; these read KKVR…VEYT and KLVT…AQDD. Y70 bears the Phosphotyrosine; by ABL mark. A Phosphoserine; by PKC modification is found at S74. S90 bears the Phosphoserine; by CK2 mark. At S110 the chain carries Phosphoserine; by PKC. S115 is modified (phosphoserine; by CK2, MARK1 and PKA). S265 carries the post-translational modification Phosphoserine; by CK2. The segment at 275 to 365 is disordered; the sequence is KGNPSATAGP…DDSDSLGDSM (91 aa). S287 carries the post-translational modification Phosphoserine; by CDK5. A Phosphothreonine; by CDK5 modification is found at T289. S294 carries the phosphoserine; by PKC modification. S297 carries the phosphoserine; by CDK5 modification. Residue S306 is modified to Phosphoserine; by CK2. Phosphoserine; by DYRK2 is present on S306. The segment covering 307 to 341 has biased composition (polar residues); that stretch reads PADSGNDQDANGTSSSQLSTPKSKQSPISTPTSPG. Position 326 is a phosphothreonine; by CDK5 (T326). A Phosphothreonine; by PKC and MAPK modification is found at T326. A Phosphoserine; by CDK5 modification is found at S332. At S332 the chain carries Phosphoserine; by MAPK. T336 bears the Phosphothreonine; by MAPK mark. Position 339 is a phosphoserine; by CDK5 (S339). A Phosphoserine; by MAPK modification is found at S339. S342 is subject to Phosphoserine; by PKC. 2 positions are modified to phosphoserine; by CK2: S354 and S360. Acidic residues predominate over residues 356–365; that stretch reads DDSDSLGDSM.

In terms of assembly, interacts with tubulin. Interacts with USP9X. Post-translationally, phosphorylation by MARK1, MARK2 and PKA regulates its ability to bind microtubules. Phosphorylation at Ser-265 and Ser-297 seems to occur only in neonatal brain, the levels falling precipitously by postnatal day 21. In terms of processing, ubiquitinated by MDM2, leading to its degradation by the proteasome. Ubiquitinated by MDM2 and subsequent degradation leads to reduce the dendritic spine density of olfactory bulb granule cells. In terms of tissue distribution, highly expressed in neuronal cells of fetal brain (in the majority of cells of the cortical plate, intermediate zone and ventricular zone), but not expressed in other fetal tissues. In the adult, highly expressed in the brain frontal lobe, but very low expression in other regions of brain, and not detected in heart, placenta, lung, liver, skeletal muscles, kidney and pancreas.

The protein resides in the cytoplasm. It localises to the cell projection. It is found in the neuron projection. In terms of biological role, microtubule-associated protein required for initial steps of neuronal dispersion and cortex lamination during cerebral cortex development. May act by competing with the putative neuronal protein kinase DCLK1 in binding to a target protein. May in that way participate in a signaling pathway that is crucial for neuronal interaction before and during migration, possibly as part of a calcium ion-dependent signal transduction pathway. May be part with PAFAH1B1/LIS-1 of overlapping, but distinct, signaling pathways that promote neuronal migration. In Homo sapiens (Human), this protein is Neuronal migration protein doublecortin (DCX).